The primary structure comprises 355 residues: tRNA N6-adenosine threonylcarbamoyltransferase (355 aa).

Residues His-111 and His-115 each coordinate Fe cation. Substrate contacts are provided by residues 134 to 138 (LVSGG), Asp-167, Gly-180, Asp-184, and Asn-279. Residue Asp-307 participates in Fe cation binding.

This sequence belongs to the KAE1 / TsaD family. Fe(2+) serves as cofactor.

It is found in the cytoplasm. It catalyses the reaction L-threonylcarbamoyladenylate + adenosine(37) in tRNA = N(6)-L-threonylcarbamoyladenosine(37) in tRNA + AMP + H(+). Its function is as follows. Required for the formation of a threonylcarbamoyl group on adenosine at position 37 (t(6)A37) in tRNAs that read codons beginning with adenine. Is involved in the transfer of the threonylcarbamoyl moiety of threonylcarbamoyl-AMP (TC-AMP) to the N6 group of A37, together with TsaE and TsaB. TsaD likely plays a direct catalytic role in this reaction. In Picosynechococcus sp. (strain ATCC 27264 / PCC 7002 / PR-6) (Agmenellum quadruplicatum), this protein is tRNA N6-adenosine threonylcarbamoyltransferase.